The sequence spans 197 residues: Holliday junction branch migration complex subunit RuvA (197 aa).

The domain I stretch occupies residues Met-1–Val-63. A domain II region spans residues Asn-64–Leu-142. The flexible linker stretch occupies residues Leu-142–Pro-146. The segment at Ala-147 to Lys-197 is domain III.

Belongs to the RuvA family. Homotetramer. Forms an RuvA(8)-RuvB(12)-Holliday junction (HJ) complex. HJ DNA is sandwiched between 2 RuvA tetramers; dsDNA enters through RuvA and exits via RuvB. An RuvB hexamer assembles on each DNA strand where it exits the tetramer. Each RuvB hexamer is contacted by two RuvA subunits (via domain III) on 2 adjacent RuvB subunits; this complex drives branch migration. In the full resolvosome a probable DNA-RuvA(4)-RuvB(12)-RuvC(2) complex forms which resolves the HJ.

The protein localises to the cytoplasm. The RuvA-RuvB-RuvC complex processes Holliday junction (HJ) DNA during genetic recombination and DNA repair, while the RuvA-RuvB complex plays an important role in the rescue of blocked DNA replication forks via replication fork reversal (RFR). RuvA specifically binds to HJ cruciform DNA, conferring on it an open structure. The RuvB hexamer acts as an ATP-dependent pump, pulling dsDNA into and through the RuvAB complex. HJ branch migration allows RuvC to scan DNA until it finds its consensus sequence, where it cleaves and resolves the cruciform DNA. This Lactococcus lactis subsp. cremoris (strain SK11) protein is Holliday junction branch migration complex subunit RuvA.